We begin with the raw amino-acid sequence, 297 residues long: Protease HtpX homolog (297 aa).

The next 2 helical transmembrane spans lie at 14-34 (VILL…AGYL) and 39-59 (YQLG…SMIF). H143 serves as a coordination point for Zn(2+). E144 is a catalytic residue. H147 provides a ligand contact to Zn(2+). The next 2 membrane-spanning stretches (helical) occupy residues 158–178 (IAVA…RMMW) and 193–213 (GFGA…PLAA). E225 provides a ligand contact to Zn(2+).

Belongs to the peptidase M48B family. It depends on Zn(2+) as a cofactor.

The protein resides in the cell membrane. The chain is Protease HtpX homolog from Streptococcus equi subsp. zooepidemicus (strain MGCS10565).